A 309-amino-acid chain; its full sequence is Homoserine kinase (309 aa).

ATP is bound at residue 91–101; it reads PIGSGLGSSAC.

Belongs to the GHMP kinase family. Homoserine kinase subfamily.

The protein resides in the cytoplasm. It carries out the reaction L-homoserine + ATP = O-phospho-L-homoserine + ADP + H(+). It functions in the pathway amino-acid biosynthesis; L-threonine biosynthesis; L-threonine from L-aspartate: step 4/5. Its function is as follows. Catalyzes the ATP-dependent phosphorylation of L-homoserine to L-homoserine phosphate. This chain is Homoserine kinase, found in Pectobacterium atrosepticum (strain SCRI 1043 / ATCC BAA-672) (Erwinia carotovora subsp. atroseptica).